The primary structure comprises 274 residues: Dermonecrotic toxin SdSicTox-betaIIB1biv (274 aa).

Residue His5 is part of the active site. 2 residues coordinate Mg(2+): Glu25 and Asp27. His41 serves as the catalytic Nucleophile. 2 disulfide bridges follow: Cys45–Cys51 and Cys47–Cys190. Position 85 (Asp85) interacts with Mg(2+).

It belongs to the arthropod phospholipase D family. Class II subfamily. Mg(2+) is required as a cofactor. As to expression, expressed by the venom gland.

Its subcellular location is the secreted. The catalysed reaction is an N-(acyl)-sphingosylphosphocholine = an N-(acyl)-sphingosyl-1,3-cyclic phosphate + choline. It catalyses the reaction an N-(acyl)-sphingosylphosphoethanolamine = an N-(acyl)-sphingosyl-1,3-cyclic phosphate + ethanolamine. It carries out the reaction a 1-acyl-sn-glycero-3-phosphocholine = a 1-acyl-sn-glycero-2,3-cyclic phosphate + choline. The enzyme catalyses a 1-acyl-sn-glycero-3-phosphoethanolamine = a 1-acyl-sn-glycero-2,3-cyclic phosphate + ethanolamine. Its function is as follows. Dermonecrotic toxins cleave the phosphodiester linkage between the phosphate and headgroup of certain phospholipids (sphingolipid and lysolipid substrates), forming an alcohol (often choline) and a cyclic phosphate. This toxin acts on sphingomyelin (SM). It may also act on ceramide phosphoethanolamine (CPE), lysophosphatidylcholine (LPC) and lysophosphatidylethanolamine (LPE), but not on lysophosphatidylserine (LPS), and lysophosphatidylglycerol (LPG). It acts by transphosphatidylation, releasing exclusively cyclic phosphate products as second products. Induces dermonecrosis, hemolysis, increased vascular permeability, edema, inflammatory response, and platelet aggregation. The sequence is that of Dermonecrotic toxin SdSicTox-betaIIB1biv from Sicarius cf. damarensis (strain GJB-2008) (Six-eyed sand spider).